Reading from the N-terminus, the 454-residue chain is tRNA modification GTPase MnmE (454 aa).

The (6S)-5-formyl-5,6,7,8-tetrahydrofolate site is built by R23, E80, and K120. A TrmE-type G domain is found at 216-377; that stretch reads GMRVVIAGRP…VREHLKACIG (162 aa). Position 226 (N226) interacts with K(+). Residues 226–231, 245–251, 270–273, and 335–338 contribute to the GTP site; these read NAGKSS, TEIAGTT, DTAG, and NKAD. A Mg(2+)-binding site is contributed by S230. 3 residues coordinate K(+): T245, I247, and T250. Residue T251 participates in Mg(2+) binding. Residue K454 participates in (6S)-5-formyl-5,6,7,8-tetrahydrofolate binding.

This sequence belongs to the TRAFAC class TrmE-Era-EngA-EngB-Septin-like GTPase superfamily. TrmE GTPase family. In terms of assembly, homodimer. Heterotetramer of two MnmE and two MnmG subunits. K(+) is required as a cofactor.

It is found in the cytoplasm. Its function is as follows. Exhibits a very high intrinsic GTPase hydrolysis rate. Involved in the addition of a carboxymethylaminomethyl (cmnm) group at the wobble position (U34) of certain tRNAs, forming tRNA-cmnm(5)s(2)U34. In Pseudoalteromonas translucida (strain TAC 125), this protein is tRNA modification GTPase MnmE.